Reading from the N-terminus, the 219-residue chain is Pyridoxine/pyridoxamine 5'-phosphate oxidase (219 aa).

Residues 15-18 (RRDY) and Lys-73 each bind substrate. FMN contacts are provided by residues 68 to 73 (RMVLLK), 83 to 84 (YT), Arg-89, Lys-90, and Gln-112. Substrate-binding residues include Tyr-130, Arg-134, and Ser-138. Residues 147–148 (QS) and Trp-192 contribute to the FMN site. Residue 198–200 (RLH) participates in substrate binding. Arg-202 lines the FMN pocket.

Belongs to the pyridoxamine 5'-phosphate oxidase family. As to quaternary structure, homodimer. Requires FMN as cofactor.

It catalyses the reaction pyridoxamine 5'-phosphate + O2 + H2O = pyridoxal 5'-phosphate + H2O2 + NH4(+). The enzyme catalyses pyridoxine 5'-phosphate + O2 = pyridoxal 5'-phosphate + H2O2. It participates in cofactor metabolism; pyridoxal 5'-phosphate salvage; pyridoxal 5'-phosphate from pyridoxamine 5'-phosphate: step 1/1. It functions in the pathway cofactor metabolism; pyridoxal 5'-phosphate salvage; pyridoxal 5'-phosphate from pyridoxine 5'-phosphate: step 1/1. Catalyzes the oxidation of either pyridoxine 5'-phosphate (PNP) or pyridoxamine 5'-phosphate (PMP) into pyridoxal 5'-phosphate (PLP). This is Pyridoxine/pyridoxamine 5'-phosphate oxidase from Acaryochloris marina (strain MBIC 11017).